The chain runs to 195 residues: Imidazole glycerol phosphate synthase subunit HisH 2 (195 aa).

The 194-residue stretch at 2 to 195 (KIIIIDTACA…LISNFIKDIG (194 aa)) folds into the Glutamine amidotransferase type-1 domain. Cys77 functions as the Nucleophile in the catalytic mechanism. Residues His175 and Glu177 contribute to the active site.

In terms of assembly, heterodimer of HisH and HisF.

The protein resides in the cytoplasm. It carries out the reaction 5-[(5-phospho-1-deoxy-D-ribulos-1-ylimino)methylamino]-1-(5-phospho-beta-D-ribosyl)imidazole-4-carboxamide + L-glutamine = D-erythro-1-(imidazol-4-yl)glycerol 3-phosphate + 5-amino-1-(5-phospho-beta-D-ribosyl)imidazole-4-carboxamide + L-glutamate + H(+). It catalyses the reaction L-glutamine + H2O = L-glutamate + NH4(+). It participates in amino-acid biosynthesis; L-histidine biosynthesis; L-histidine from 5-phospho-alpha-D-ribose 1-diphosphate: step 5/9. In terms of biological role, IGPS catalyzes the conversion of PRFAR and glutamine to IGP, AICAR and glutamate. The HisH subunit provides the glutamine amidotransferase activity that produces the ammonia necessary to HisF for the synthesis of IGP and AICAR. This is Imidazole glycerol phosphate synthase subunit HisH 2 (hisH2) from Campylobacter jejuni subsp. jejuni serotype O:2 (strain ATCC 700819 / NCTC 11168).